A 338-amino-acid chain; its full sequence is MNLQRFSRYPLTFGPTPIQPLKRLSQHLGGKVELYAKREDCNSGLAFGGNKTRKLEYLVPDALAQGADTLVSIGGVQSNQTRQVAAVAAHLGMKCVLVQEHWVNYEDPVYDRVGNIQLSRMMGADVRLVADGFDIGIRRSWEEAMESVRQAGGKPYPIPAGCSEHPLGGLGFVGFAEEVREQEAQLGFKFDYVVVCSVTGSTQAGMVVGFAADGRADRVIGIDASATPERTHEQITRIARHTAELVDLGRPITEADVVLDTRYAGPEYGLPNDGTLEAIRLCARLEGMLTDPVYEGKSMHGMIDKVRRGEFEPGSKVLYAHLGGVPALSAYAEIFRNG.

Lysine 51 is subject to N6-(pyridoxal phosphate)lysine. The active-site Nucleophile is serine 78.

This sequence belongs to the ACC deaminase/D-cysteine desulfhydrase family. As to quaternary structure, homotrimer. Pyridoxal 5'-phosphate is required as a cofactor.

It catalyses the reaction 1-aminocyclopropane-1-carboxylate + H2O = 2-oxobutanoate + NH4(+). In terms of biological role, catalyzes a cyclopropane ring-opening reaction, the irreversible conversion of 1-aminocyclopropane-1-carboxylate (ACC) to ammonia and alpha-ketobutyrate. Allows growth on ACC as a nitrogen source. This chain is 1-aminocyclopropane-1-carboxylate deaminase, found in Burkholderia ambifaria (strain ATCC BAA-244 / DSM 16087 / CCUG 44356 / LMG 19182 / AMMD) (Burkholderia cepacia (strain AMMD)).